Here is a 355-residue protein sequence, read N- to C-terminus: Elongation factor Ts (355 aa).

The tract at residues 82–85 (TDFV) is involved in Mg(2+) ion dislocation from EF-Tu.

It belongs to the EF-Ts family.

The protein localises to the cytoplasm. Functionally, associates with the EF-Tu.GDP complex and induces the exchange of GDP to GTP. It remains bound to the aminoacyl-tRNA.EF-Tu.GTP complex up to the GTP hydrolysis stage on the ribosome. In Helicobacter pylori (strain J99 / ATCC 700824) (Campylobacter pylori J99), this protein is Elongation factor Ts (tsf).